The chain runs to 717 residues: Catalase-peroxidase (717 aa).

Positions 1-20 are disordered; sequence MSGKCPVMHGGNTSTGTSNK. The segment covering 11–20 has biased composition (polar residues); the sequence is GNTSTGTSNK. The segment at residues 91–219 is a cross-link (tryptophyl-tyrosyl-methioninium (Trp-Tyr) (with M-245)); it reads WHSAGSYRLA…LAAVQMGLIY (129 aa). The active-site Proton acceptor is H92. The tryptophyl-tyrosyl-methioninium (Tyr-Met) (with W-91) cross-link spans 219-245; that stretch reads YVNPEGVNGQPDPQKTAEQVRETFARM. Residue H260 participates in heme b binding.

This sequence belongs to the peroxidase family. Peroxidase/catalase subfamily. In terms of assembly, homodimer or homotetramer. It depends on heme b as a cofactor. Formation of the three residue Trp-Tyr-Met cross-link is important for the catalase, but not the peroxidase activity of the enzyme.

It catalyses the reaction H2O2 + AH2 = A + 2 H2O. It carries out the reaction 2 H2O2 = O2 + 2 H2O. Functionally, bifunctional enzyme with both catalase and broad-spectrum peroxidase activity. The sequence is that of Catalase-peroxidase from Chromohalobacter salexigens (strain ATCC BAA-138 / DSM 3043 / CIP 106854 / NCIMB 13768 / 1H11).